A 286-amino-acid polypeptide reads, in one-letter code: Nucleotide-binding protein APL_0334 (286 aa).

8-15 contacts ATP; it reads GRSGSGKS. GTP is bound at residue 56-59; the sequence is DIRN.

This sequence belongs to the RapZ-like family.

In terms of biological role, displays ATPase and GTPase activities. This Actinobacillus pleuropneumoniae serotype 5b (strain L20) protein is Nucleotide-binding protein APL_0334.